Here is a 417-residue protein sequence, read N- to C-terminus: UDP-N-acetylglucosamine 1-carboxyvinyltransferase (417 aa).

22–23 is a binding site for phosphoenolpyruvate; it reads KN. UDP-N-acetyl-alpha-D-glucosamine is bound at residue Arg92. Cys116 acts as the Proton donor in catalysis. The residue at position 116 (Cys116) is a 2-(S-cysteinyl)pyruvic acid O-phosphothioketal. UDP-N-acetyl-alpha-D-glucosamine contacts are provided by Asp304 and Ile326.

The protein belongs to the EPSP synthase family. MurA subfamily.

The protein resides in the cytoplasm. The catalysed reaction is phosphoenolpyruvate + UDP-N-acetyl-alpha-D-glucosamine = UDP-N-acetyl-3-O-(1-carboxyvinyl)-alpha-D-glucosamine + phosphate. It participates in cell wall biogenesis; peptidoglycan biosynthesis. Functionally, cell wall formation. Adds enolpyruvyl to UDP-N-acetylglucosamine. The protein is UDP-N-acetylglucosamine 1-carboxyvinyltransferase of Geobacter sulfurreducens (strain ATCC 51573 / DSM 12127 / PCA).